The following is a 303-amino-acid chain: THAP domain-containing protein 11 (303 aa).

Residues 6-64 (CCVPGCYNNSHRDKALHFYTFPKDAELRRLWLKNVSRAGVSGCFSTFQPTTGHRLCSVH) form a THAP-type zinc finger. 2 disordered regions span residues 85-132 (VNER…AQTT) and 155-174 (SSQA…GEDV). The span at 93–132 (RPAGAAAARRRQQQQQQQQQQQQQQQQQQPSPSASTAQTT) shows a compositional bias: low complexity. Positions 232–235 (DHSY) match the HCFC1-binding motif (HBM) motif. Residues 244-294 (EELLRKLNEQRDILALMEVKMKEMKGSIRHLRLTEAKLREELREKDRLLAM) adopt a coiled-coil conformation.

This sequence belongs to the THAP11 family. Forms homodimers. Interacts via HBM with HCFC1. Forms a complex with HCFC1 and ZNF143.

It localises to the nucleus. The protein resides in the cytoplasm. Functionally, transcription factor, which has both transcriptional activation and repression activities. Also modulates chromatin accessibility. In complex with HCFC1 and ZNF143, regulates the expression of several genes, including AP2S1, ESCO2, OPHN1, RBL1, UBXN8 and ZNF32. May regulate the expression of genes that encode both cytoplasmic and mitochondrial ribosomal proteins. Required for normal mitochondrial development and function. Regulates mitochondrial gene expression, including that of components of the electron transport chain. Involved in the maintainance of pluripotency in early embryonic cells, possibly through its action on mitochondrial maturation which is required to meet high energy demands of these cells. Required for early development of retina, preventing premature exit of retinal progenitor cells from the cell cycle. This effect may also be mediated by its action on mitochondria. Through the regulation of MMACHC gene expression, controls cobalamin metabolism. Required for normal brain development and neural precursor differentiation. Involved in cell growth. In Bos taurus (Bovine), this protein is THAP domain-containing protein 11 (THAP11).